A 206-amino-acid polypeptide reads, in one-letter code: Type III pantothenate kinase (206 aa).

5 to 12 (DIGNTFLH) is a binding site for ATP. Substrate-binding positions include Y69 and 73–76 (GVDR). The active-site Proton acceptor is D75. D90 contacts K(+). ATP is bound at residue S93. T145 contacts substrate.

The protein belongs to the type III pantothenate kinase family. In terms of assembly, homodimer. NH4(+) serves as cofactor. The cofactor is K(+).

It localises to the cytoplasm. It catalyses the reaction (R)-pantothenate + ATP = (R)-4'-phosphopantothenate + ADP + H(+). Its pathway is cofactor biosynthesis; coenzyme A biosynthesis; CoA from (R)-pantothenate: step 1/5. Functionally, catalyzes the phosphorylation of pantothenate (Pan), the first step in CoA biosynthesis. In Helicobacter hepaticus (strain ATCC 51449 / 3B1), this protein is Type III pantothenate kinase.